A 968-amino-acid polypeptide reads, in one-letter code: Breast cancer anti-estrogen resistance protein 1 (968 aa).

At Met1 the chain carries N-acetylmethionine. An SH3 domain is found at 97–159 (DKNVLAKALY…PGNRLKILVG (63 aa)). A disordered region spans residues 164-277 (KPAAPGPGPP…GPGSPAQDIY (114 aa)). The segment covering 167–182 (APGPGPPATPPQPQPS) has biased composition (pro residues). The tract at residues 213–514 (YLVPTPSKTQ…DGVYAVPPPA (302 aa)) is substrate for kinases. Phosphotyrosine; by SRC is present on Tyr226. Residues 233–249 (PQFQSPPAKQTSTFSKQ) show a composition bias toward polar residues. The residue at position 237 (Ser237) is a Phosphoserine. Tyr332 bears the Phosphotyrosine mark. At Tyr347 the chain carries Phosphotyrosine; by ABL1. Residue Thr367 is modified to Phosphothreonine. The residue at position 390 (Ser390) is a Phosphoserine. The tract at residues 393–416 (KGLPPSNHHSVYDVPPSVSKDVPD) is disordered. Residues Tyr460, Tyr470, and Tyr508 each carry the phosphotyrosine modification. Disordered stretches follow at residues 503–544 (IDDG…SLEV) and 705–756 (RTKA…NSEG). Over residues 514–524 (AEREAPTDGKR) the composition is skewed to basic and acidic residues. The span at 525-542 (LSASSTGSTRSSQSASSL) shows a compositional bias: low complexity. Phosphoserine is present on residues Ser526, Ser535, and Ser737. The span at 715-753 (GSSSLHLNPTDKASSIQSRPLPSPPKFTSQDSPDGQYEN) shows a compositional bias: polar residues. The SH3-binding motif lies at 733–741 (RPLPSPPKF). Positions 844 to 894 (FYLEQCEANLTTLTDAVDAFFTAVATNQPPKIFVAHSKFVILSAHKLVFIG) are divergent helix-loop-helix motif.

It belongs to the CAS family. In terms of assembly, forms complexes in vivo with PTK2/FAK1, adapter protein CRKL and LYN kinase. Can heterodimerize with NEDD9. Component of a complex comprised of SH2D3C, BCAR1/CAS, and CRK. Within the complex, interacts with SH2D3C (via C-terminus), and CRK. Part of a complex comprised of PTPRA, BCAR1, BCAR3 (via SH2 domain) and SRC; the formation of the complex is dependent on integrin mediated-tyrosine phosphorylation of PTPRA. Interacts with BCAR3 (via Ras-GEF domain); the interaction regulates adhesion-dependent serine phosphorylation. Interacts with SMAD2 and SMAD3. Interacts with NPHP1. Interacts with PTK2B/PYK2. Interacts (via C-terminus) with SH2D3C/CHAT isoform 2 (via C-terminus). Interacts with activated CSPG4. Interacts with BMX, INPPL1/SHIP2 and PEAK1. Part of a collagen stimulated complex involved in cell migration composed of CDC42, CRK, TNK2 and BCAR1/p130cas. Interacts with TNK2 via SH3 domains. Interacts with PTK2B/PYK2. Interacts (when tyrosine-phosphorylated) with tensin TNS1; the interaction is increased by phosphorylation of TNS1. Post-translationally, PTK2/FAK1 activation mediates phosphorylation at the YDYVHL motif; phosphorylation is most likely catalyzed by SRC family members. SRC-family kinases are recruited to the phosphorylated sites and can phosphorylate other tyrosine residues. Tyrosine phosphorylation is triggered by integrin mediated adhesion of cells to the extracellular matrix. In terms of processing, phosphorylated by SRC kinase in a EDN1- and PTK2B-mediated manner; phosphorylation strengthens its interaction with BCAR3 as part of the PTK2B/BCAR1/BCAR3/RAP1 signaling pathway. Dephosphorylated by PTPN14 at Tyr-226. Widely expressed. Higher expression in lung, intestine and testis.

It is found in the cell junction. The protein localises to the focal adhesion. The protein resides in the cytoplasm. Its subcellular location is the cell projection. It localises to the axon. Docking protein which plays a central coordinating role for tyrosine-kinase-based signaling related to cell adhesion. Implicated in induction of cell migration and cell branching. Involved in the BCAR3-mediated inhibition of TGFB signaling. In Rattus norvegicus (Rat), this protein is Breast cancer anti-estrogen resistance protein 1 (Bcar1).